A 369-amino-acid chain; its full sequence is DNA replication and repair protein RecF (369 aa).

30–37 is a binding site for ATP; sequence GDNGSGKT.

The protein belongs to the RecF family.

The protein localises to the cytoplasm. The RecF protein is involved in DNA metabolism; it is required for DNA replication and normal SOS inducibility. RecF binds preferentially to single-stranded, linear DNA. It also seems to bind ATP. This is DNA replication and repair protein RecF from Pseudomonas paraeruginosa (strain DSM 24068 / PA7) (Pseudomonas aeruginosa (strain PA7)).